A 205-amino-acid polypeptide reads, in one-letter code: Small ribosomal subunit protein uS4 (205 aa).

Positions 94-157 constitute an S4 RNA-binding domain; the sequence is SRLDTVVYRM…KQIALIQESI (64 aa).

It belongs to the universal ribosomal protein uS4 family. As to quaternary structure, part of the 30S ribosomal subunit. Contacts protein S5. The interaction surface between S4 and S5 is involved in control of translational fidelity.

Functionally, one of the primary rRNA binding proteins, it binds directly to 16S rRNA where it nucleates assembly of the body of the 30S subunit. With S5 and S12 plays an important role in translational accuracy. The polypeptide is Small ribosomal subunit protein uS4 (Rickettsia canadensis (strain McKiel)).